A 726-amino-acid polypeptide reads, in one-letter code: Procollagen-lysine,2-oxoglutarate 5-dioxygenase 1 (726 aa).

The N-terminal stretch at 1 to 18 (MRLLLLLAPLGWLLLAET) is a signal peptide. N-linked (GlcNAc...) asparagine glycosylation is found at Asn196 and Asn537. One can recognise a Fe2OG dioxygenase domain in the interval 635–726 (QFDLAFVVRY…RYIAVSFVDP (92 aa)). 2 residues coordinate Fe cation: His655 and Asp657. Asn685 carries N-linked (GlcNAc...) asparagine glycosylation. His707 is a Fe cation binding site. Residue Arg717 is part of the active site.

Homodimer. Identified in a complex with P3H3 and P3H4. Fe(2+) serves as cofactor. Requires L-ascorbate as cofactor.

The protein resides in the rough endoplasmic reticulum membrane. The catalysed reaction is L-lysyl-[collagen] + 2-oxoglutarate + O2 = (5R)-5-hydroxy-L-lysyl-[collagen] + succinate + CO2. Functionally, part of a complex composed of PLOD1, P3H3 and P3H4 that catalyzes hydroxylation of lysine residues in collagen alpha chains and is required for normal assembly and cross-linkling of collagen fibrils. Forms hydroxylysine residues in -Xaa-Lys-Gly- sequences in collagens. These hydroxylysines serve as sites of attachment for carbohydrate units and are essential for the stability of the intermolecular collagen cross-links. The protein is Procollagen-lysine,2-oxoglutarate 5-dioxygenase 1 (PLOD1) of Bos taurus (Bovine).